The primary structure comprises 315 residues: WD repeat domain-containing protein 83 (315 aa).

WD repeat units follow at residues 23-62 (CGQGAVRAVRFNVDGNYCLTCGSDKTLKLWNPLRGTLLRT), 65-104 (GHGYEVLDAAGSFDNSHLCSGGGDKTVVLWDVATGQVVRK), 107-146 (GHAGKVNTVQFNEEATVILSGSIDSSVRCWDCRSRKPEPV), 151-188 (EARDGISSVKVSDHEILAGSVDGRVRRYDLRMGQVTSD), 190-228 (VGSPITCTCFSRDGQCTLISSLDSTLRLLDKDTGELLGE), 231-272 (GHKN…LALA), and 275-313 (VGSNVVQSLAYHPADPCLLTAMGGSIQYWREETYEAEGG).

It belongs to the WD repeat MORG1 family. Interacts with EGLN3/PHD3. Interacts with ERK signaling proteins MAP2K1/MEK1, MAP2K2/MEK2, LAMTOR3, ARAF/Raf-1, MAPK1/ERK2 and MAPK3/ERK1. Identified in the spliceosome C complex. Interacts with PARD6B and CRB3. Interacts strongly with GTP-bound RRAGA but not with inactive GDP-bound. Interacts with p62/SQSTM1. In terms of tissue distribution, highly expressed in testis and brain. Expressed at intermediate level in heart, liver and kidney. Weakly expressed in spleen and lung and absent in muscle.

It localises to the cytoplasm. Its subcellular location is the lysosome. It is found in the nucleus. Molecular scaffold protein for various multimeric protein complexes. Acts as a module in the assembly of a multicomponent scaffold for the ERK pathway, linking ERK responses to specific agonists. At low concentrations it enhances ERK activation, whereas high concentrations lead to the inhibition of ERK activation. Also involved in response to hypoxia by acting as a negative regulator of HIF1A/HIF-1-alpha via its interaction with EGLN3/PHD3. May promote degradation of HIF1A. May act by recruiting signaling complexes to a specific upstream activator. May also be involved in pre-mRNA splicing. Participates in tight junction development by regulating apico-basal polarity, a key step in tissue development and organization. Mechanistically, regulates the translocation of PAR6-aPKC from the cytoplasm to the apical surface by acting as an adapter between PARD6B AND CRB3. Also acts as a negative regulator of mTORC1 under nutrient-rich conditions by binding to the active Rag GTPases to inhibit mTORC1 localization to the lysosome and phosphorylation of downstream targets. This facilitates constitutive basal autophagy during nutrient availability. The polypeptide is WD repeat domain-containing protein 83 (Wdr83) (Rattus norvegicus (Rat)).